Consider the following 113-residue polypeptide: Hydrogenase maturation factor HypA (113 aa).

Histidine 2 serves as a coordination point for Ni(2+). Cysteine 73, cysteine 76, cysteine 89, and cysteine 92 together coordinate Zn(2+).

The protein belongs to the HypA/HybF family.

In terms of biological role, involved in the maturation of [NiFe] hydrogenases. Required for nickel insertion into the metal center of the hydrogenase. The chain is Hydrogenase maturation factor HypA from Chlorobium phaeobacteroides (strain BS1).